The sequence spans 1047 residues: MPRHSSTMSRLVLPLIFSILLVSKPSPSQAQDESLAGSFLSGLLDTITSTADSKDCPGVCVHTLATLICYEVLDDVACPSPSMKCCIENAPAGKNATAVRATTTPKTTTTASTTTTQRTTTTVATTSTTKRTTTTSTTPKPKPKPQTKRPATSSTTKATVATTKKPSTTKKVATAKPKDKEEATKADDANKDCTGVCVADRIAEYCEAYLTSDGLCKEGTKCCVSLDEYSNGKLPKDIYIPAKHMSNLKPNQTLSEKSAPAKSSSTSTTSTTTTTSTTTTPEPARINNSSPKPTKHKKHPTTTTTEAAEEEEEQETEEDGEEEEPPLSNKLKSGQGQGQVLKECEGECMNGIFAIFCDDIDSDAFCPGEESCCVTGGASEATPSSKAPPTKPAIKHAPKPAAKPARPASPPPAPPSSTSGGGGGGDFLSQIISFAESTLNSPSPPPPPPQAPIQVPRCPGFCLLNIMAAFCERPSVLVSTPTTCAKGSVCCDNSRAGAPKPKLPPPTPSPTASPTAPPYVLPNTPSPDPREECPGSCIVSLLSFTCFKNAEMTDLFRCKRSGQICCAPKSKILEKQQFQTRNDTAYYPAPPPPPIGPPQAYPPQTPPYSYMNNPPPQGPPPQMAPHHPNPYQPPPPAPNYADYYPVSGPGLPPQPQPPMTTPPTTTTTTTTPRPHVYSKYVCGVKGTLRTGRSQALSFVSYARAKYGVQRTARQMTSAAGYSPNFNKSNERLVLGSAIVPIQIHNDKLGDLVESSSLQSNQLRSYHNHQAQADQPDLVYPEYYQQRSLYGLQSNFSGRRRARVVGGEDGENGEWCWQVALINSLNQYLCGAALIGTQWVLTAAHCVTNIVRSGDAIYVRVGDYDLTRKYGSPGAQTLRVATTYIHHNHNSQTLDNDIALLKLHGQAELRDGVCLVCLPARGVSHAAGKRCTVTGYGYMGEAGPIPLRVREAEIPIVSDTECIRKVNAVTEKIFILPASSFCAGGEEGHDACQGDGGGPLVCQDDGFYELAGLVSWGFGCGRQDVPGVYVKTSSFIGWINQIISVNNL.

An N-terminal signal peptide occupies residues 1–30 (MPRHSSTMSRLVLPLIFSILLVSKPSPSQA). Positions 54-87 (KDCPGVCVHTLATLICYEVLDDVACPSPSMKCCI) are CLIP 1. 3 disulfide bridges follow: cysteine 56-cysteine 85, cysteine 60-cysteine 78, and cysteine 69-cysteine 86. The N-linked (GlcNAc...) asparagine glycan is linked to asparagine 95. Composition is skewed to low complexity over residues 98-139 (AVRA…STTP) and 148-175 (KRPA…VATA). The disordered stretch occupies residues 98-189 (AVRATTTPKT…KEEATKADDA (92 aa)). Basic and acidic residues predominate over residues 176–189 (KPKDKEEATKADDA). The CLIP 2 stretch occupies residues 192 to 224 (DCTGVCVADRIAEYCEAYLTSDGLCKEGTKCCV). 3 disulfides stabilise this stretch: cysteine 193-cysteine 222, cysteine 197-cysteine 216, and cysteine 206-cysteine 223. A glycan (N-linked (GlcNAc...) asparagine) is linked at asparagine 251. Residues 252 to 335 (QTLSEKSAPA…PLSNKLKSGQ (84 aa)) are disordered. The span at 263–280 (SSSTSTTSTTTTTSTTTT) shows a compositional bias: low complexity. Residue asparagine 287 is glycosylated (N-linked (GlcNAc...) asparagine). Acidic residues predominate over residues 307-325 (AAEEEEEQETEEDGEEEEP). The CLIP 3 stretch occupies residues 343-374 (ECEGECMNGIFAIFCDDIDSDAFCPGEESCCV). 3 cysteine pairs are disulfide-bonded: cysteine 344-cysteine 372, cysteine 348-cysteine 366, and cysteine 357-cysteine 373. The tract at residues 376 to 428 (GGASEATPSSKAPPTKPAIKHAPKPAAKPARPASPPPAPPSSTSGGGGGGDFL) is disordered. The interval 457–492 (RCPGFCLLNIMAAFCERPSVLVSTPTTCAKGSVCCD) is CLIP 4. 3 disulfides stabilise this stretch: cysteine 458–cysteine 490, cysteine 462–cysteine 484, and cysteine 471–cysteine 491. The disordered stretch occupies residues 498–527 (APKPKLPPPTPSPTASPTAPPYVLPNTPSP). Over residues 501 to 527 (PKLPPPTPSPTASPTAPPYVLPNTPSP) the composition is skewed to pro residues. A CLIP 5 region spans residues 532 to 567 (ECPGSCIVSLLSFTCFKNAEMTDLFRCKRSGQICCA). Intrachain disulfides connect cysteine 533–cysteine 565, cysteine 537–cysteine 558, and cysteine 546–cysteine 566. The N-linked (GlcNAc...) asparagine glycan is linked to asparagine 582. The tract at residues 583–673 (DTAYYPAPPP…TTTTTTTTPR (91 aa)) is disordered. 3 stretches are compositionally biased toward pro residues: residues 588–606 (PAPP…PQTP), 613–638 (NPPP…PPAP), and 650–661 (GLPPQPQPPMTT). The span at 662–672 (PPTTTTTTTTP) shows a compositional bias: low complexity. Cystine bridges form between cysteine 682-cysteine 916, cysteine 829-cysteine 845, cysteine 930-cysteine 1001, cysteine 961-cysteine 981, and cysteine 991-cysteine 1019. 2 N-linked (GlcNAc...) asparagine glycosylation sites follow: asparagine 726 and asparagine 794. The tract at residues 803 to 1043 (VVGGEDGENG…FIGWINQIIS (241 aa)) is peptidase S1.

The protein belongs to the peptidase S1 family. CLIP subfamily. Proteolytically cleaved and thereafter secreted.

Its subcellular location is the secreted. It localises to the cell projection. The protein resides in the axon. In embryogenesis, has a role in somatic muscle attachment and in the development of axonal pathways probably by stabilizing cell-matrix adhesion and/or by acting as a competitive antagonist of serine proteases. The protein is Protein masquerade of Drosophila melanogaster (Fruit fly).